The following is a 352-amino-acid chain: Phosphoribosylformylglycinamidine cyclo-ligase (352 aa).

The protein belongs to the AIR synthase family.

It is found in the cytoplasm. It carries out the reaction 2-formamido-N(1)-(5-O-phospho-beta-D-ribosyl)acetamidine + ATP = 5-amino-1-(5-phospho-beta-D-ribosyl)imidazole + ADP + phosphate + H(+). It functions in the pathway purine metabolism; IMP biosynthesis via de novo pathway; 5-amino-1-(5-phospho-D-ribosyl)imidazole from N(2)-formyl-N(1)-(5-phospho-D-ribosyl)glycinamide: step 2/2. The chain is Phosphoribosylformylglycinamidine cyclo-ligase from Pseudomonas entomophila (strain L48).